The chain runs to 334 residues: MAKMLKLWRLVLLAAFSLLLMAARMPDMKVVPWQQVEVPTQNILLDIAFTGTNPSHGWLVGDKATLLESQDGGLHWQVRKLTALEPEAYLSSISFAGAEGWVVGQPRILLHTLNEGSDWTSIRLSKQLPGEPILIQALGPGAAEMVTNVGAIYRTEDGGQTWHAQVEEPIGAIKNIARGPGGEYLAVSSRGSFYFLYTPESRSWKPYPRESSRRIQNMGFGPNGSAWKLNQGAEIAFTSDFTSGEWSKPLRPGRALSFGYLNAAYQNDHDLWVVGGGGTLIHSPDGGKTWEEAKKLSNIPANFYSIEFFGPDRGFILGQRGTLLRYVGYSNSPS.

The N-terminal stretch at 1 to 22 (MAKMLKLWRLVLLAAFSLLLMA) is a signal peptide.

This sequence belongs to the Ycf48 family. As to quaternary structure, part of early PSII assembly complexes which includes D1 (psbA) and PsbI; not found in mature PSII. Binds to the lumenal side of PSII complexes. Interacts with YidC.

The protein resides in the cellular thylakoid lumen. Its function is as follows. A factor required for optimal assembly of photosystem II (PSII), acting in the early stages of PSII assembly. Also plays a role in replacement of photodamaged D1 (psbA). Assists YidC in synthesis of chlorophyll-binding proteins. The polypeptide is Photosystem II assembly protein Ycf48 (Synechococcus sp. (strain JA-3-3Ab) (Cyanobacteria bacterium Yellowstone A-Prime)).